Reading from the N-terminus, the 387-residue chain is N6-succino-2-amino-2'-deoxyadenylate synthase (387 aa).

The Proton acceptor role is filled by Ser14. ATP is bound by residues Ser14, Thr15, Gly16, Lys17, and Gly18. Ser14 serves as a coordination point for dGMP. A Mg(2+)-binding site is contributed by Ser14. Asn40 contributes to the dGMP binding site. Gly42, His43, and Thr44 together coordinate ATP. Gly42 contacts Mg(2+). Residues Ser125, Thr126, and Arg140 each contribute to the dGMP site. Gln207 provides a ligand contact to ATP. DGMP is bound at residue Thr222. Thr293 is a binding site for Mg(2+). L-aspartate is bound by residues Thr293, Val294, and Arg299. Residues Asn324 and Asn327 each coordinate ATP.

It belongs to the Caudovirales PurZ family. It depends on Mg(2+) as a cofactor.

It carries out the reaction dGMP + L-aspartate + ATP = (2S)-2-amino-2'-deoxyadenylo-succinate + ADP + phosphate + 2 H(+). It participates in purine metabolism. In terms of biological role, involved in the synthesis of the atypical nucleotide dZTP (2-amino-2'-deoxyadenosine-5'-triphosphate). Catalyzes the condensation of aspartate with deoxyguanylate into dSMP (N6-succino-2-amino-2'-deoxyadenylate), which undergoes defumarylation and phosphorylation respectively by host PurB and guanylate/nucleoside diphosphate kinases to give dZTP. dZTP is integrated into the viral genome instead of adenine by the viral DNA polymerase. This Z-base probably completely replaces adenosine and forms a triple bond to the opposite T-base. The resulting non-standard viral DNA is called Z-genome. The chemically modified DNA is probably harder for the host bacteria to digest with nucleases or restriction enzymes. The polypeptide is N6-succino-2-amino-2'-deoxyadenylate synthase (Acinetobacter phage SH-Ab 15497).